Consider the following 177-residue polypeptide: Large ribosomal subunit protein uL6 (177 aa).

This sequence belongs to the universal ribosomal protein uL6 family. As to quaternary structure, part of the 50S ribosomal subunit.

Functionally, this protein binds to the 23S rRNA, and is important in its secondary structure. It is located near the subunit interface in the base of the L7/L12 stalk, and near the tRNA binding site of the peptidyltransferase center. The protein is Large ribosomal subunit protein uL6 of Pectobacterium atrosepticum (strain SCRI 1043 / ATCC BAA-672) (Erwinia carotovora subsp. atroseptica).